A 371-amino-acid polypeptide reads, in one-letter code: Queuine tRNA-ribosyltransferase (371 aa).

Asp-90 functions as the Proton acceptor in the catalytic mechanism. Substrate is bound by residues 90–94, Asp-144, Gln-188, and Gly-215; that span reads DSGGF. The RNA binding stretch occupies residues 246 to 252; it reads GVGTPED. Asp-265 functions as the Nucleophile in the catalytic mechanism. The tract at residues 270–274 is RNA binding; important for wobble base 34 recognition; sequence TRNAR. Zn(2+) is bound by residues Cys-303, Cys-305, Cys-308, and His-334.

This sequence belongs to the queuine tRNA-ribosyltransferase family. Homodimer. Within each dimer, one monomer is responsible for RNA recognition and catalysis, while the other monomer binds to the replacement base PreQ1. Zn(2+) is required as a cofactor.

It catalyses the reaction 7-aminomethyl-7-carbaguanine + guanosine(34) in tRNA = 7-aminomethyl-7-carbaguanosine(34) in tRNA + guanine. It participates in tRNA modification; tRNA-queuosine biosynthesis. Its function is as follows. Catalyzes the base-exchange of a guanine (G) residue with the queuine precursor 7-aminomethyl-7-deazaguanine (PreQ1) at position 34 (anticodon wobble position) in tRNAs with GU(N) anticodons (tRNA-Asp, -Asn, -His and -Tyr). Catalysis occurs through a double-displacement mechanism. The nucleophile active site attacks the C1' of nucleotide 34 to detach the guanine base from the RNA, forming a covalent enzyme-RNA intermediate. The proton acceptor active site deprotonates the incoming PreQ1, allowing a nucleophilic attack on the C1' of the ribose to form the product. After dissociation, two additional enzymatic reactions on the tRNA convert PreQ1 to queuine (Q), resulting in the hypermodified nucleoside queuosine (7-(((4,5-cis-dihydroxy-2-cyclopenten-1-yl)amino)methyl)-7-deazaguanosine). The polypeptide is Queuine tRNA-ribosyltransferase (Neisseria meningitidis serogroup A / serotype 4A (strain DSM 15465 / Z2491)).